Consider the following 343-residue polypeptide: Dihydroorotate dehydrogenase (quinone) (343 aa).

Residues 65-69 and T89 each bind FMN; that span reads AGFDK. Position 69 (K69) interacts with substrate. 114–118 is a binding site for substrate; it reads NRMGF. FMN contacts are provided by N145 and N178. N178 contacts substrate. The Nucleophile role is filled by S181. A substrate-binding site is contributed by N183. FMN contacts are provided by K215 and T243. A substrate-binding site is contributed by 244–245; that stretch reads NT. FMN contacts are provided by residues G269, G298, and 319 to 320; that span reads YT.

The protein belongs to the dihydroorotate dehydrogenase family. Type 2 subfamily. Monomer. It depends on FMN as a cofactor.

It is found in the cell membrane. It carries out the reaction (S)-dihydroorotate + a quinone = orotate + a quinol. It functions in the pathway pyrimidine metabolism; UMP biosynthesis via de novo pathway; orotate from (S)-dihydroorotate (quinone route): step 1/1. Its function is as follows. Catalyzes the conversion of dihydroorotate to orotate with quinone as electron acceptor. This chain is Dihydroorotate dehydrogenase (quinone), found in Leifsonia xyli subsp. xyli (strain CTCB07).